The following is a 407-amino-acid chain: S-adenosylmethionine synthase (407 aa).

His19 is a binding site for ATP. Residue Asp21 participates in Mg(2+) binding. Glu47 serves as a coordination point for K(+). L-methionine contacts are provided by Glu60 and Gln103. Residues 103-113 (QSQEIADGVDN) are flexible loop. The disordered stretch occupies residues 107–134 (IADGVDNSDEARTNGDVEEDDRAGAGDQ). ATP is bound by residues 178 to 180 (DGK), Asp258, 264 to 265 (RK), Ala281, and Lys285. Asp258 provides a ligand contact to L-methionine. Residue Lys289 participates in L-methionine binding.

This sequence belongs to the AdoMet synthase family. As to quaternary structure, homotetramer; dimer of dimers. Requires Mg(2+) as cofactor. It depends on K(+) as a cofactor.

The protein localises to the cytoplasm. It carries out the reaction L-methionine + ATP + H2O = S-adenosyl-L-methionine + phosphate + diphosphate. It participates in amino-acid biosynthesis; S-adenosyl-L-methionine biosynthesis; S-adenosyl-L-methionine from L-methionine: step 1/1. Functionally, catalyzes the formation of S-adenosylmethionine (AdoMet) from methionine and ATP. The overall synthetic reaction is composed of two sequential steps, AdoMet formation and the subsequent tripolyphosphate hydrolysis which occurs prior to release of AdoMet from the enzyme. The polypeptide is S-adenosylmethionine synthase (Corynebacterium glutamicum (strain ATCC 13032 / DSM 20300 / JCM 1318 / BCRC 11384 / CCUG 27702 / LMG 3730 / NBRC 12168 / NCIMB 10025 / NRRL B-2784 / 534)).